Consider the following 1196-residue polypeptide: MDRSEIVARENPVITQRVTNLLRTNAPLLFMPIDIHEVRYGAYMLFMYGSLENGYKAEVRIENIPVFFDVQIESDNTNQLFLKSLLAAENITYERLETLTQRPVMGYREKEKEFAPYIRIFFKSLYERRKAITYLNNMGYNTAADDTTCYYRMVSRELKLPLTSWIQLQHYSYEPRGLVHRFSVTPEDLVSYQDDGPTDHSIVMAYDIETYSPVKGTVPDPNQANDVVFMICMRIFWIHSTEPLASTCITMAPCKKSPEWTTIVCSSEKNLLLSFAEQFSRWAPDICTGFNDSRYDWPFIVEKSMQHDILEEVFNKMSLFWPQKLDTILKCYYVKEKRVKISAEKSIISSFLHTPGCLPMDVRNMCMQLYPKAEKTSLKAFLENCGLDSKVDLPYHLMWKYYETRDSEKMADVAYYCIIDAQRCQDLLVRHNVIPDRREVGILSYTSLYDCIYYAGGHKVCNMLIAYAIHDEYGRIACSTIARGKREHGKYPGAFVIDPVKGLEQDKPTTGLDFASLYPSLIMAYNFSPEKFVASRDEANSLMAKGESLHYVSFHFNNRLVEGWFVRHNNVPDKMGLYPKVLIDLLNKRTALKQELKKLGEKKECIHESHPGFKELQFRHAMVDAKQKALKIFMNTFYGEAGNNLSPFFLLPLAGGVTSSGQYNLKLVYNFVINKGYGIKYGDTDSLYITCPDSLYTEVTDAYLNSQKTIKHYEQLCHEKVLLSMKAMSTLCAEVNEYLRQDNGTSYLRMAYEEVLFPVCFTGKKKYYGIAHVNTPNFNTKELFIRGIDIIKQGQTKLTKTIGTRIMEESMKLRRPEDHRPPLIEIVKTVLKDAVVNMKQWNFEDFIQTDAWRPDKDNKAVQIFMSRMHARREQLKKHGAAATSQFAEPEPGERFSYVIVEKQVQFDIQGHRTDTTRKGDKMEYVSEAKAKNLPIDILFYINNYVLGLCARFINENEEFQPPGNVSNKDEYAQRRAKSYLQKFVQSIHPKDKSVIKQGIVHRQCYKYVHQEIKKKIGIFADLYKEFFNNTTNPIESFIQSTQFMIHYFDEEQKVNHSMKKMVEQHAALAGNPAGNALMRAIFTQLIVEEKKIVQALYNKGDEIHDLLTYIINNINYKIATFQTKQMLTFELSSTHVELLLKLNKTWLILVGIHVAKKHLHVLLGLSNNEPPSKTFIQQAIEEECGSIKPSCYDFIS.

Belongs to the DNA polymerase type-B family.

The enzyme catalyses DNA(n) + a 2'-deoxyribonucleoside 5'-triphosphate = DNA(n+1) + diphosphate. In terms of biological role, DNA-directed DNA polymerase involved in viral DNA replication. The protein is DNA polymerase beta of African swine fever virus (isolate Pig/Kenya/KEN-50/1950) (ASFV).